Consider the following 316-residue polypeptide: L-lactate dehydrogenase (316 aa).

Residues V16, D37, K42, Y68, and 82–83 (GA) each bind NAD(+). Substrate is bound by residues Q85 and R91. Residues S104, 121–123 (AAN), and S146 contribute to the NAD(+) site. 123-126 (NPVD) contributes to the substrate binding site. A substrate-binding site is contributed by 151-154 (DSAR). Positions 156 and 171 each coordinate beta-D-fructose 1,6-bisphosphate. The active-site Proton acceptor is the H178. Y222 carries the post-translational modification Phosphotyrosine. T231 lines the substrate pocket.

This sequence belongs to the LDH/MDH superfamily. LDH family. As to quaternary structure, homotetramer.

The protein resides in the cytoplasm. The enzyme catalyses (S)-lactate + NAD(+) = pyruvate + NADH + H(+). It participates in fermentation; pyruvate fermentation to lactate; (S)-lactate from pyruvate: step 1/1. Allosterically activated by fructose 1,6-bisphosphate (FBP). In terms of biological role, catalyzes the conversion of lactate to pyruvate. The protein is L-lactate dehydrogenase of Staphylococcus epidermidis (strain ATCC 12228 / FDA PCI 1200).